Reading from the N-terminus, the 564-residue chain is CTP synthase (564 aa).

Residues 1–272 (MARPKNVKHI…DIRVLKKLGL (272 aa)) are amidoligase domain. Position 18 (serine 18) interacts with CTP. Serine 18 contacts UTP. 19-24 (SLGKGI) lines the ATP pocket. Tyrosine 59 provides a ligand contact to L-glutamine. Residue aspartate 76 participates in ATP binding. Mg(2+) is bound by residues aspartate 76 and glutamate 146. CTP contacts are provided by residues 153 to 155 (DIE), 193 to 198 (KTKPTQ), and lysine 229. UTP is bound by residues 193–198 (KTKPTQ) and lysine 229. In terms of domain architecture, Glutamine amidotransferase type-1 spans 299–543 (TIAICGKYTE…VAAAKEFAHG (245 aa)). Glycine 363 is a binding site for L-glutamine. Catalysis depends on cysteine 390, which acts as the Nucleophile; for glutamine hydrolysis. L-glutamine contacts are provided by residues 391 to 394 (LGMQ), glutamate 414, and arginine 471. Active-site residues include histidine 516 and glutamate 518.

Belongs to the CTP synthase family. In terms of assembly, homotetramer.

It carries out the reaction UTP + L-glutamine + ATP + H2O = CTP + L-glutamate + ADP + phosphate + 2 H(+). The enzyme catalyses L-glutamine + H2O = L-glutamate + NH4(+). It catalyses the reaction UTP + NH4(+) + ATP = CTP + ADP + phosphate + 2 H(+). It functions in the pathway pyrimidine metabolism; CTP biosynthesis via de novo pathway; CTP from UDP: step 2/2. Its activity is regulated as follows. Allosterically activated by GTP, when glutamine is the substrate; GTP has no effect on the reaction when ammonia is the substrate. The allosteric effector GTP functions by stabilizing the protein conformation that binds the tetrahedral intermediate(s) formed during glutamine hydrolysis. Inhibited by the product CTP, via allosteric rather than competitive inhibition. Functionally, catalyzes the ATP-dependent amination of UTP to CTP with either L-glutamine or ammonia as the source of nitrogen. Regulates intracellular CTP levels through interactions with the four ribonucleotide triphosphates. The sequence is that of CTP synthase from Prosthecochloris aestuarii (strain DSM 271 / SK 413).